Reading from the N-terminus, the 127-residue chain is Large ribosomal subunit protein bL19 (127 aa).

Belongs to the bacterial ribosomal protein bL19 family.

This protein is located at the 30S-50S ribosomal subunit interface and may play a role in the structure and function of the aminoacyl-tRNA binding site. The chain is Large ribosomal subunit protein bL19 from Myxococcus xanthus (strain DK1622).